Consider the following 63-residue polypeptide: Conotoxin Cal12.5 (63 aa).

The signal sequence occupies residues 1–21 (MKVTCVLVVLLLLLPYGDLLG).

It belongs to the conotoxin O1 superfamily. In terms of processing, contains 4 disulfide bonds. In terms of tissue distribution, expressed by the venom duct.

Its subcellular location is the secreted. In terms of biological role, probable neurotoxin. The chain is Conotoxin Cal12.5 from Californiconus californicus (California cone).